The chain runs to 475 residues: Ribulose bisphosphate carboxylase large chain (475 aa).

Residues 1–2 (MS) constitute a propeptide that is removed on maturation. At Pro3 the chain carries N-acetylproline. Position 14 is an N6,N6,N6-trimethyllysine (Lys14). Substrate contacts are provided by Asn123 and Thr173. The active-site Proton acceptor is the Lys175. Lys177 lines the substrate pocket. Lys201, Asp203, and Glu204 together coordinate Mg(2+). Position 201 is an N6-carboxylysine (Lys201). His294 (proton acceptor) is an active-site residue. Substrate contacts are provided by Arg295, His327, and Ser379.

Belongs to the RuBisCO large chain family. Type I subfamily. In terms of assembly, heterohexadecamer of 8 large chains and 8 small chains; disulfide-linked. The disulfide link is formed within the large subunit homodimers. It depends on Mg(2+) as a cofactor. In terms of processing, the disulfide bond which can form in the large chain dimeric partners within the hexadecamer appears to be associated with oxidative stress and protein turnover.

Its subcellular location is the plastid. The protein localises to the chloroplast. The catalysed reaction is 2 (2R)-3-phosphoglycerate + 2 H(+) = D-ribulose 1,5-bisphosphate + CO2 + H2O. It carries out the reaction D-ribulose 1,5-bisphosphate + O2 = 2-phosphoglycolate + (2R)-3-phosphoglycerate + 2 H(+). In terms of biological role, ruBisCO catalyzes two reactions: the carboxylation of D-ribulose 1,5-bisphosphate, the primary event in carbon dioxide fixation, as well as the oxidative fragmentation of the pentose substrate in the photorespiration process. Both reactions occur simultaneously and in competition at the same active site. This Pinus thunbergii (Japanese black pine) protein is Ribulose bisphosphate carboxylase large chain.